We begin with the raw amino-acid sequence, 27 residues long: Cupiennin-3b (27 aa).

Glu27 is modified (glutamic acid 1-amide).

In terms of tissue distribution, expressed by the venom gland.

It is found in the secreted. This chain is Cupiennin-3b, found in Cupiennius salei (American wandering spider).